We begin with the raw amino-acid sequence, 51 residues long: Large ribosomal subunit protein eL39-like (51 aa).

This sequence belongs to the eukaryotic ribosomal protein eL39 family. In terms of assembly, component of a male germ cell-specific 60S large ribosomal subunit (LSU), which contains RPL10L and RPL39L, instead of RPL10 and RPL39 paralogs. The composition of the rest of the complex is similar to classical ribosomes. Highly expressed in spermatocytes and spermatids. Highly expressed in embryonic stem cells.

It is found in the cytoplasm. Its function is as follows. Male germ cell-specific component of the ribosome, which is required for the formation of sperm and male fertility. Replaces the RPL39 paralog in the ribosome of male germ cells. The ribosome is a large ribonucleoprotein complex responsible for the synthesis of proteins in the cell. The male germ cell-specific ribosome displays a ribosomal polypeptide exit tunnel of distinct size and charge states compared with the classical ribosome. It is responsible for regulating the biosynthesis and folding of a subset of male germ-cell-specific proteins that are essential for the formation of sperm. In Mus musculus (Mouse), this protein is Large ribosomal subunit protein eL39-like.